Here is a 189-residue protein sequence, read N- to C-terminus: Protein GrpE (189 aa).

The span at 1 to 13 shows a compositional bias: polar residues; sequence MSENKQPEQNQDL. A disordered region spans residues 1–35; it reads MSENKQPEQNQDLTGEPSPEELEAAQAADEFDAMN.

The protein belongs to the GrpE family. As to quaternary structure, homodimer.

The protein localises to the cytoplasm. Participates actively in the response to hyperosmotic and heat shock by preventing the aggregation of stress-denatured proteins, in association with DnaK and GrpE. It is the nucleotide exchange factor for DnaK and may function as a thermosensor. Unfolded proteins bind initially to DnaJ; upon interaction with the DnaJ-bound protein, DnaK hydrolyzes its bound ATP, resulting in the formation of a stable complex. GrpE releases ADP from DnaK; ATP binding to DnaK triggers the release of the substrate protein, thus completing the reaction cycle. Several rounds of ATP-dependent interactions between DnaJ, DnaK and GrpE are required for fully efficient folding. This is Protein GrpE from Polaromonas naphthalenivorans (strain CJ2).